Reading from the N-terminus, the 235-residue chain is Small ribosomal subunit protein uS3 (235 aa).

The KH type-2 domain maps to 39–107 (VRSYVKKKLI…PAQVNISEIR (69 aa)).

The protein belongs to the universal ribosomal protein uS3 family. As to quaternary structure, part of the 30S ribosomal subunit. Forms a tight complex with proteins S10 and S14.

In terms of biological role, binds the lower part of the 30S subunit head. Binds mRNA in the 70S ribosome, positioning it for translation. The protein is Small ribosomal subunit protein uS3 of Buchnera aphidicola subsp. Cinara cedri (strain Cc).